A 469-amino-acid chain; its full sequence is Tubulin gamma-2 chain (469 aa).

Residue 142–148 (AGGTGSG) coordinates GTP.

Belongs to the tubulin family.

It is found in the cytoplasm. It localises to the cytoskeleton. The protein resides in the microtubule organizing center. Its function is as follows. Tubulin is the major constituent of microtubules. The gamma chain is found at microtubule organizing centers (MTOC) such as the spindle poles, suggesting that it is involved in the minus-end nucleation of microtubule assembly. The polypeptide is Tubulin gamma-2 chain (TUBG2) (Oryza sativa subsp. japonica (Rice)).